We begin with the raw amino-acid sequence, 189 residues long: UPF0398 protein LVIS_0849 (189 aa).

This sequence belongs to the UPF0398 family.

In Levilactobacillus brevis (strain ATCC 367 / BCRC 12310 / CIP 105137 / JCM 1170 / LMG 11437 / NCIMB 947 / NCTC 947) (Lactobacillus brevis), this protein is UPF0398 protein LVIS_0849.